The primary structure comprises 405 residues: L-carnitine CoA-transferase (405 aa).

Residues Lys-97 and Arg-104 each coordinate CoA. Asp-169 acts as the Nucleophile in catalysis.

This sequence belongs to the CoA-transferase III family. CaiB subfamily. As to quaternary structure, homodimer.

It localises to the cytoplasm. It catalyses the reaction crotonobetainyl-CoA + (R)-carnitine = crotonobetaine + (R)-carnitinyl-CoA. The catalysed reaction is 4-(trimethylamino)butanoyl-CoA + (R)-carnitine = (R)-carnitinyl-CoA + 4-(trimethylamino)butanoate. Its pathway is amine and polyamine metabolism; carnitine metabolism. Functionally, catalyzes the reversible transfer of the CoA moiety from gamma-butyrobetainyl-CoA to L-carnitine to generate L-carnitinyl-CoA and gamma-butyrobetaine. Is also able to catalyze the reversible transfer of the CoA moiety from gamma-butyrobetainyl-CoA or L-carnitinyl-CoA to crotonobetaine to generate crotonobetainyl-CoA. This Salmonella enteritidis PT4 (strain P125109) protein is L-carnitine CoA-transferase.